The following is a 559-amino-acid chain: Putative ankyrin repeat protein RBE_0902 (559 aa).

10 ANK repeats span residues 11 to 40 (DGWT…EQAI), 46 to 75 (DGNT…DQAI), 81 to 110 (DGNT…TKQN), 158 to 189 (DDWT…VINH), 228 to 257 (NNDT…DQAI), 263 to 292 (DGNT…DQAI), 298 to 327 (YGNT…EQAI), 333 to 364 (QCDT…AINC), 372 to 402 (FGFT…EVII), and 524 to 554 (IDNN…WGLE).

The sequence is that of Putative ankyrin repeat protein RBE_0902 from Rickettsia bellii (strain RML369-C).